Here is a 293-residue protein sequence, read N- to C-terminus: Inner membrane ABC transporter permease protein YcjO (293 aa).

The Periplasmic segment spans residues 1–12; it reads MNRLFSGRSDMP. A helical transmembrane segment spans residues 13–33; the sequence is FALLLLAPSLLLLGGLVAWPM. Residues 34 to 77 lie on the Cytoplasmic side of the membrane; it reads VSNIEISFLRLPLNPNIESTFVGVSNYVRILSDPGFWHSLWMTV. The ABC transmembrane type-1 domain occupies 73–283; that stretch reads LWMTVWYTAL…IIIFAVILLT (211 aa). Residues 78–98 traverse the membrane as a helical segment; that stretch reads WYTALVVAGSTVLGLAVAMFF. Over 99 to 110 the chain is Periplasmic; sequence NREFRLRKTARS. A helical transmembrane segment spans residues 111 to 131; it reads LVILSYVTPSISLVFAWKYMF. The Cytoplasmic segment spans residues 132–135; that stretch reads NNGY. Residues 136–156 traverse the membrane as a helical segment; that stretch reads GIVNYLGVDLLHLYEQAPLWF. Topologically, residues 157–162 are periplasmic; it reads DNPGSS. A helical transmembrane segment spans residues 163–183; the sequence is FVLVVLFAIWRYFPYAFISFL. Residues 184 to 214 lie on the Cytoplasmic side of the membrane; that stretch reads AILQTIDKSLYEAAEMDGANAWQRFRIVTLP. The chain crosses the membrane as a helical span at residues 215–235; that stretch reads AIMPVLATVVTLRTIWMFYMF. The Periplasmic segment spans residues 236–261; the sequence is ADVYLLTTKVDILGVYLYKTAFAFND. Residues 262–282 traverse the membrane as a helical segment; sequence LGKAAAISVVLFIIIFAVILL. Over 283 to 293 the chain is Cytoplasmic; the sequence is TRKRVNLNGNK.

This sequence belongs to the binding-protein-dependent transport system permease family. MalFG subfamily.

It localises to the cell inner membrane. Functionally, probably part of the binding-protein-dependent transport system YcjNOP. Probably responsible for the translocation of the substrate across the membrane. The chain is Inner membrane ABC transporter permease protein YcjO (ycjO) from Escherichia coli (strain K12).